Consider the following 200-residue polypeptide: Probable GTP-binding protein EngB (200 aa).

One can recognise an EngB-type G domain in the interval 30–199 (KKAEVAIAGR…EDYIYENWIK (170 aa)). GTP is bound by residues 38–45 (GRSNAGKS), 64–68 (GKTRL), 82–85 (DMPG), 149–152 (TKAD), and 178–180 (VSA). Mg(2+)-binding residues include Ser45 and Thr66.

Belongs to the TRAFAC class TrmE-Era-EngA-EngB-Septin-like GTPase superfamily. EngB GTPase family. Mg(2+) is required as a cofactor.

Its function is as follows. Necessary for normal cell division and for the maintenance of normal septation. This chain is Probable GTP-binding protein EngB, found in Bdellovibrio bacteriovorus (strain ATCC 15356 / DSM 50701 / NCIMB 9529 / HD100).